The sequence spans 122 residues: Large ribosomal subunit protein uL14 (122 aa).

It belongs to the universal ribosomal protein uL14 family. As to quaternary structure, part of the 50S ribosomal subunit. Forms a cluster with proteins L3 and L19. In the 70S ribosome, L14 and L19 interact and together make contacts with the 16S rRNA in bridges B5 and B8.

Functionally, binds to 23S rRNA. Forms part of two intersubunit bridges in the 70S ribosome. The polypeptide is Large ribosomal subunit protein uL14 (Borreliella afzelii (strain PKo) (Borrelia afzelii)).